Consider the following 134-residue polypeptide: Transcription antitermination protein NusB (134 aa).

The protein belongs to the NusB family.

Functionally, involved in transcription antitermination. Required for transcription of ribosomal RNA (rRNA) genes. Binds specifically to the boxA antiterminator sequence of the ribosomal RNA (rrn) operons. This chain is Transcription antitermination protein NusB, found in Shewanella frigidimarina (strain NCIMB 400).